The chain runs to 1005 residues: Espin-like protein (1005 aa).

9 ANK repeats span residues 1 to 31 (MEKQRALVAAKDGDVATLERLLEAGALGPGI), 35 to 64 (LGAGLVHHATRAGHLDCVKFLVQRAQLPGN), 69 to 99 (NGATPAHDAAATGSLAELCWLVREGGCGLQD), 103 to 132 (SGVSPLHLAARFGHPVLVEWLLHEGHSATL), 136 to 166 (EGARPLHHAAVSGDLTCLKLLTAAHGSSVNR), 170 to 200 (SGASPLYLACQEGHLHLAQFLVKDCGADVHL), 204 to 234 (DGMSALHAAAARGHYSLVVWLVTFTDIGLTA), 238 to 267 (EGATALHFAARGGHTPILDRLLLMGTPILR), and 270 to 299 (WGGTPLHDAAENGQMECCQTLVSHHVDPSL). Disordered stretches follow at residues 333–444 (LMTP…ERGQ) and 462–483 (LGAESSAEAQDNGGSSGPTEQA). Residues 334-346 (MTPPPPPFPPPPL) are compositionally biased toward pro residues. Over residues 468 to 480 (AEAQDNGGSSGPT) the composition is skewed to polar residues. The stretch at 517-541 (LQLRRRCQEYESELGRLAAELQALL) forms a coiled coil. Disordered regions lie at residues 616–644 (GDEKPSTRPLQDTCREASASPPRSEAQRQ), 695–730 (RSGLASGEPRPGDTEEASDSGISCEEVPSEAGAAAG), and 773–795 (LRGQEAARSPGPPSPPSEGPRLG).

Interacts with MYO3A (via C-terminus). Interacts with MYO3B (via C-terminus).

It localises to the cell projection. The protein localises to the stereocilium. In terms of biological role, binds to but does not cross-link actin. Required for the formation and maintenance of inner ear hair cell stereocilia and staircase formation. Essential for normal hearing. This chain is Espin-like protein (ESPNL), found in Homo sapiens (Human).